The following is a 147-amino-acid chain: uncharacterized protein (147 aa).

This is an uncharacterized protein from Acidianus convivator (ATV).